The chain runs to 429 residues: Intraflagellar transport protein 57 homolog (429 aa).

The interval 1-26 (MAAAAAVVTPSGLEDEVSRSRGEGAG) is disordered. Residues 305–369 (KYINNQLEHL…MEEKGSSMTD (65 aa)) are a coiled coil. The pDED stretch occupies residues 335-426 (GNGGVTERTR…HATIIPESAI (92 aa)).

Belongs to the IFT57 family. As to quaternary structure, component of the IFT complex B, at least composed of IFT20, IFT22, IFT25, IFT27, IFT46, IFT52, TRAF3IP1/IFT54, IFT57, IFT74, IFT80, IFT81, and IFT88. Interacts with IFT20. Interacts with IFT88. Interacts with IFT80, IFT-81, IFT74, IFT172, IFT70B and KIF17. Interacts with BLOC1S2. Interacts with RYBP. Interacts with HOMER1; the interaction possibly prevents the pro-apoptotic effects of IFT57. Interacts with HIP1. In normal conditions, it poorly interacts with HIP1, HIP1 being strongly associated with HTT. However, in mutant HTT proteins with a long poly-Gln region, interaction between HTT and HIP1 is inhibited, promoting the interaction between HIP1 and IFT57, leading to apoptosis. Interacts with BFAR. Interacts with TTC25. Interacts with USH1G. In retina, detected in the photoreceptor basal body and connecting cilium. Most abundant in the inner segment of photoreceptors (at protein level).

It is found in the cell projection. It localises to the cilium. The protein localises to the cytoplasm. The protein resides in the cytoskeleton. Its subcellular location is the cilium basal body. Required for the formation of cilia. Plays an indirect role in sonic hedgehog signaling, cilia being required for all activity of the hedgehog pathway. Has pro-apoptotic function via its interaction with HIP1, leading to recruit caspase-8 (CASP8) and trigger apoptosis. Has the ability to bind DNA sequence motif 5'-AAAGACATG-3' present in the promoter of caspase genes such as CASP1, CASP8 and CASP10, suggesting that it may act as a transcription regulator; however the relevance of such function remains unclear. In Bos taurus (Bovine), this protein is Intraflagellar transport protein 57 homolog (IFT57).